The primary structure comprises 1097 residues: Error-prone DNA polymerase (1097 aa).

The interval 1039–1097 (PTGRGDEFAHGSPGGGDSRDRSPPKPRDIVVPLCRARHKGIDPEPETMPSAFPKPRDFR) is disordered. The segment covering 1055-1066 (DSRDRSPPKPRD) has biased composition (basic and acidic residues).

It belongs to the DNA polymerase type-C family. DnaE2 subfamily.

It localises to the cytoplasm. It catalyses the reaction DNA(n) + a 2'-deoxyribonucleoside 5'-triphosphate = DNA(n+1) + diphosphate. DNA polymerase involved in damage-induced mutagenesis and translesion synthesis (TLS). It is not the major replicative DNA polymerase. This chain is Error-prone DNA polymerase, found in Allorhizobium ampelinum (strain ATCC BAA-846 / DSM 112012 / S4) (Agrobacterium vitis (strain S4)).